The following is a 430-amino-acid chain: MDEQPRLMHSHAGVGMAGHPGLSQHLQDGAGGTEGEGGRKQDIGDILQQIMTITDQSLDEAQARKHALNCHRMKPALFNVLCEIKEKTVLSIRGAQEEEPTDPQLMRLDNMLLAEGVAGPEKGGGSAAAAAAAAASGGAGSDNSVEHSDYRAKLSQIRQIYHTELEKYEQACNEFTTHVMNLLREQSRTRPISPKEIERMVSIIHRKFSSIQMQLKQSTCEAVMILRSRFLDARRKRRNFNKQATEILNEYFYSHLSNPYPSEEAKEELAKKCGITVSQVSNWFGNKRIRYKKNIGKFQEEANIYAAKTAVTATNVSAHGSQANSPSTPNSAGSSSSFNMSNSGDLFMSVQSLNGDSYQGAQVGANVQSQVDTLRHVISQTGGYSDGLAASQMYSPQGISANGGWQDATTPSSVTSPTEGPGSVHSDTSN.

A disordered region spans residues 1 to 40 (MDEQPRLMHSHAGVGMAGHPGLSQHLQDGAGGTEGEGGRK). A PBC domain is found at 38-232 (GRKQDIGDIL…VMILRSRFLD (195 aa)). The segment at 45-124 (DILQQIMTIT…EGVAGPEKGG (80 aa)) is PBC-A. The tract at residues 127-232 (AAAAAAAAAS…VMILRSRFLD (106 aa)) is PBC-B. A DNA-binding region (homeobox; TALE-type) is located at residues 233 to 295 (ARRKRRNFNK…NKRIRYKKNI (63 aa)). Disordered regions lie at residues 317 to 338 (SAHGSQANSPSTPNSAGSSSSF) and 395 to 430 (SPQGISANGGWQDATTPSSVTSPTEGPGSVHSDTSN). Low complexity predominate over residues 323-338 (ANSPSTPNSAGSSSSF). The span at 407 to 418 (DATTPSSVTSPT) shows a compositional bias: polar residues.

The protein belongs to the TALE/PBX homeobox family. In terms of assembly, forms a heterodimer with MEIS1 which binds DNA. The PBX1-MEIS1 heterodimer binds a cAMP-responsive sequence in CYP17. It also binds a consensus region in the SOX3 promoter. PBX1 forms heterotrimers with MEIS1 and a number of HOX proteins including HOXA9, HOXD4, HOXD9 and HOXD10. Forms heterodimers with HOXA1, HOXA5, HOXB7 and HOXB8 which bind the 5'-TGATTGAT-3' consensus sequence. Also forms heterodimers with HOXA5, HOXB7, HOXB8, HOXC8 and HOXD4 which bind the 5'-ATCAATCAA-3' consensus sequence. Interacts with PBXIP1. Interacts with TLX1. Interacts with FOXC1. Interacts with MN1. Interacts with MEIS2 isoform 4, SP1, SP3 and KLF4. As to quaternary structure, part of a PDX1:PBX1b:MEIS2B complex; PBX1b recruits MEIS2B to the complex. Expressed in the kidney. Expressed in the endothelial cells of the glomeruli and interstitium (at protein level). Expressed in all tissues except in cells of the B and T lineage. Expressed strongly in kidney and brain.

The protein resides in the nucleus. In terms of biological role, transcription factor which binds the DNA sequence 5'-TGATTGAT-3' as part of a heterodimer with HOX proteins such as HOXA1, HOXA5, HOXB7 and HOXB8. Binds to the DNA sequence 5'-TGATTGAC-3' in complex with a nuclear factor which is not a class I HOX protein. Has also been shown to bind the DNA sequence 5'-ATCAATCAA-3' cooperatively with HOXA5, HOXB7, HOXB8, HOXC8 and HOXD4. Acts as a transcriptional activator of PF4 in complex with MEIS1. Also activates transcription of SOX3 in complex with MEIS1 by binding to the 5'-TGATTGAC-3' consensus sequence. In natural killer cells, binds to the NFIL3 promoter and acts as a transcriptional activator of NFIL3, promoting natural killer cell development. Plays a role in the cAMP-dependent regulation of CYP17A1 gene expression via its cAMP-regulatory sequence (CRS1). Probably in complex with MEIS2, involved in transcriptional regulation by KLF4. Acts as a transcriptional activator of NKX2-5 and a transcriptional repressor of CDKN2B. Together with NKX2-5, required for spleen development through a mechanism that involves CDKN2B repression. Functionally, as part of a PDX1:PBX1b:MEIS2B complex in pancreatic acinar cells, is involved in the transcriptional activation of the ELA1 enhancer; the complex binds to the enhancer B element and cooperates with the transcription factor 1 complex (PTF1) bound to the enhancer A element. This Homo sapiens (Human) protein is Pre-B-cell leukemia transcription factor 1 (PBX1).